The chain runs to 431 residues: Adenylosuccinate synthetase (431 aa).

GTP is bound by residues 12 to 18 and 40 to 42; these read GDEGKGK and GHT. The active-site Proton acceptor is Asp-13. Asp-13 and Gly-40 together coordinate Mg(2+). Residues 13–16, 38–41, Thr-129, Arg-143, Gln-224, Thr-239, and Arg-303 contribute to the IMP site; these read DEGK and NAGH. The active-site Proton donor is His-41. 299-305 lines the substrate pocket; it reads VTTGRAR. GTP is bound by residues Arg-305, 331 to 333, and 413 to 415; these read KLD and GVG.

Belongs to the adenylosuccinate synthetase family. Homodimer. Requires Mg(2+) as cofactor.

Its subcellular location is the cytoplasm. It carries out the reaction IMP + L-aspartate + GTP = N(6)-(1,2-dicarboxyethyl)-AMP + GDP + phosphate + 2 H(+). The protein operates within purine metabolism; AMP biosynthesis via de novo pathway; AMP from IMP: step 1/2. Its function is as follows. Plays an important role in the de novo pathway of purine nucleotide biosynthesis. Catalyzes the first committed step in the biosynthesis of AMP from IMP. The polypeptide is Adenylosuccinate synthetase (Mycobacteroides abscessus (strain ATCC 19977 / DSM 44196 / CCUG 20993 / CIP 104536 / JCM 13569 / NCTC 13031 / TMC 1543 / L948) (Mycobacterium abscessus)).